A 319-amino-acid chain; its full sequence is MLGKAGSVVWMLCAIWVAADALTVETTQDILRAARGRSVTLPCTYNTYVSDREGFIQWDKLLRSQTERVVTWNFVTKKYIYGNRYENRVRVSNDAELSNASITIDQLTMDDNGTYECSVSLMSDQDVNAKSRVRLLVLVPPSKPDCSIQGEMVIGNNIQLTCHSAEGSPSPQYSWKSYNAQNQQRPLTQPVSGEPLLLKNISTETAGYYICTSSNDVGIESCNITVAPRPPSMNIALYAGIAGGVFVALIIIGVIVYCCCCREKDDKDQDREDARPNRAAYQVPKKEQKEISRGREDEDDHRHEDRWSSGRSTPDQPFQ.

Positions 1–21 (MLGKAGSVVWMLCAIWVAADA) are cleaved as a signal peptide. Residues 22–134 (LTVETTQDIL…QDVNAKSRVR (113 aa)) form the Ig-like V-type domain. The Extracellular portion of the chain corresponds to 22-235 (LTVETTQDIL…VAPRPPSMNI (214 aa)). 3 disulfide bridges follow: C43-C117, C146-C222, and C162-C211. N99, N112, N200, and N223 each carry an N-linked (GlcNAc...) asparagine glycan. The Ig-like C2-type domain maps to 140 to 227 (PPSKPDCSIQ…GIESCNITVA (88 aa)). The chain crosses the membrane as a helical span at residues 236-256 (ALYAGIAGGVFVALIIIGVIV). The Cytoplasmic portion of the chain corresponds to 257–319 (YCCCCREKDD…GRSTPDQPFQ (63 aa)). Composition is skewed to basic and acidic residues over residues 267–276 (KDQDREDARP) and 284–308 (PKKE…DRWS). The segment at 267-319 (KDQDREDARPNRAAYQVPKKEQKEISRGREDEDDHRHEDRWSSGRSTPDQPFQ) is disordered. Residues 309 to 319 (SGRSTPDQPFQ) show a composition bias toward polar residues.

Post-translationally, palmitoylated.

It is found in the membrane. Functionally, may play a role in cell-cell recognition and signaling. This is Cell surface A33 antigen (Gpa33) from Mus musculus (Mouse).